We begin with the raw amino-acid sequence, 389 residues long: Flap endonuclease 1 (389 aa).

The segment at M1–R105 is N-domain. D34 contacts Mg(2+). Residue R71 participates in DNA binding. Residues D87, E159, E161, D180, and D182 each contribute to the Mg(2+) site. The segment at E123–H254 is I-domain. Position 159 (E159) interacts with DNA. The DNA site is built by G232 and D234. D234 contacts Mg(2+). An interaction with PCNA region spans residues S338–F346. A disordered region spans residues I356–N389.

The protein belongs to the XPG/RAD2 endonuclease family. FEN1 subfamily. In terms of assembly, interacts with PCNA. Three molecules of FEN1 bind to one PCNA trimer with each molecule binding to one PCNA monomer. PCNA stimulates the nuclease activity without altering cleavage specificity. Requires Mg(2+) as cofactor. Post-translationally, phosphorylated. Phosphorylation upon DNA damage induces relocalization to the nuclear plasma.

It localises to the nucleus. It is found in the nucleolus. The protein resides in the nucleoplasm. The protein localises to the mitochondrion. Its function is as follows. Structure-specific nuclease with 5'-flap endonuclease and 5'-3' exonuclease activities involved in DNA replication and repair. During DNA replication, cleaves the 5'-overhanging flap structure that is generated by displacement synthesis when DNA polymerase encounters the 5'-end of a downstream Okazaki fragment. It enters the flap from the 5'-end and then tracks to cleave the flap base, leaving a nick for ligation. Also involved in the long patch base excision repair (LP-BER) pathway, by cleaving within the apurinic/apyrimidinic (AP) site-terminated flap. Acts as a genome stabilization factor that prevents flaps from equilibrating into structures that lead to duplications and deletions. Also possesses 5'-3' exonuclease activity on nicked or gapped double-stranded DNA, and exhibits RNase H activity. Also involved in replication and repair of rDNA and in repairing mitochondrial DNA. This chain is Flap endonuclease 1, found in Ostreococcus lucimarinus (strain CCE9901).